We begin with the raw amino-acid sequence, 72 residues long: MNLGINYDRILNKAKYKYVIPIIAAKRAETLKNLDELKGITEKKDYVSIALKELENGKIQVKNSALLDSLSK.

This sequence belongs to the RNA polymerase subunit omega family. As to quaternary structure, the RNAP catalytic core consists of 2 alpha, 1 beta, 1 beta' and 1 omega subunit. When a sigma factor is associated with the core the holoenzyme is formed, which can initiate transcription.

It catalyses the reaction RNA(n) + a ribonucleoside 5'-triphosphate = RNA(n+1) + diphosphate. Functionally, promotes RNA polymerase assembly. Latches the N- and C-terminal regions of the beta' subunit thereby facilitating its interaction with the beta and alpha subunits. The protein is DNA-directed RNA polymerase subunit omega of Petrotoga mobilis (strain DSM 10674 / SJ95).